The primary structure comprises 87 residues: Large ribosomal subunit protein bL27 (87 aa).

The tract at residues 1-21 (MAHKKAGGSSRNGRDSESKRL) is disordered.

Belongs to the bacterial ribosomal protein bL27 family.

The chain is Large ribosomal subunit protein bL27 from Paraburkholderia xenovorans (strain LB400).